The following is a 199-amino-acid chain: dTTP/UTP pyrophosphatase (199 aa).

D73 serves as the catalytic Proton acceptor.

This sequence belongs to the Maf family. YhdE subfamily. It depends on a divalent metal cation as a cofactor.

The protein localises to the cytoplasm. It catalyses the reaction dTTP + H2O = dTMP + diphosphate + H(+). The enzyme catalyses UTP + H2O = UMP + diphosphate + H(+). In terms of biological role, nucleoside triphosphate pyrophosphatase that hydrolyzes dTTP and UTP. May have a dual role in cell division arrest and in preventing the incorporation of modified nucleotides into cellular nucleic acids. The chain is dTTP/UTP pyrophosphatase from Caldicellulosiruptor saccharolyticus (strain ATCC 43494 / DSM 8903 / Tp8T 6331).